The primary structure comprises 250 residues: 5-oxoprolinase subunit A (250 aa).

Belongs to the LamB/PxpA family. Forms a complex composed of PxpA, PxpB and PxpC.

The enzyme catalyses 5-oxo-L-proline + ATP + 2 H2O = L-glutamate + ADP + phosphate + H(+). Functionally, catalyzes the cleavage of 5-oxoproline to form L-glutamate coupled to the hydrolysis of ATP to ADP and inorganic phosphate. The protein is 5-oxoprolinase subunit A of Staphylococcus aureus (strain bovine RF122 / ET3-1).